Consider the following 330-residue polypeptide: HTH-type transcriptional regulator GanR (330 aa).

An HTH lacI-type domain is found at 2–57 (ATIKDIAQEAGFSISTVSRVLNNDESLSVPDETREKIYEAAEKLNYRKKTVRPLVK). A DNA-binding region (H-T-H motif) is located at residues 4 to 23 (IKDIAQEAGFSISTVSRVLN).

In terms of biological role, negatively regulates the expression of the ganSPQAB operon. Inhibits transcription of the operon by binding to an operator in the promoter region. In the presence of galactobiose, GanR dissociates from the promoter, resulting in the expression of the gan operon. The polypeptide is HTH-type transcriptional regulator GanR (Bacillus subtilis (strain 168)).